The sequence spans 73 residues: Putative ORF9c protein (73 aa).

Residues 47–67 (AAVGELLLLEWLAMAVMLLLL) form a helical membrane-spanning segment.

The protein resides in the membrane. In terms of biological role, may induce apoptosis in cardiomyocytes when overexpressed ex-vivo. This is Putative ORF9c protein from Homo sapiens (Human).